Consider the following 70-residue polypeptide: Potassium channel toxin kappa-KTx 2.5 (70 aa).

The N-terminal stretch at 1–26 (MESSRKSYVLMLFLAFVIMNVCSVSG) is a signal peptide. A propeptide spanning residues 27-42 (EPKDGEIAGFEMEEAR) is cleaved from the precursor. 2 cysteine pairs are disulfide-bonded: cysteine 46/cysteine 64 and cysteine 50/cysteine 60.

Belongs to the short scorpion toxin superfamily. Potassium channel inhibitor kappa-KTx family. Kappa-KTx 2 subfamily. In terms of tissue distribution, expressed by the venom gland.

The protein resides in the secreted. In terms of biological role, voltage-independently blocks potassium currents on hKv1.1/KCNA1 (IC(50)=217 uM), and hKv1.4/KCNA4 (IC(50)=71 uM) (expressed in CHO cells). The chain is Potassium channel toxin kappa-KTx 2.5 from Opisthacanthus cayaporum (South American scorpion).